Reading from the N-terminus, the 618-residue chain is DNA mismatch repair protein MutL (618 aa).

Over residues 366 to 381 the composition is skewed to low complexity; that stretch reads AEPTAAREPATPRYSG. A disordered region spans residues 366–403; that stretch reads AEPTAAREPATPRYSGGASGGNGGRQSAGGWPHAQPGY. Gly residues predominate over residues 382 to 392; sequence GASGGNGGRQS.

The protein belongs to the DNA mismatch repair MutL/HexB family.

This protein is involved in the repair of mismatches in DNA. It is required for dam-dependent methyl-directed DNA mismatch repair. May act as a 'molecular matchmaker', a protein that promotes the formation of a stable complex between two or more DNA-binding proteins in an ATP-dependent manner without itself being part of a final effector complex. In Salmonella schwarzengrund (strain CVM19633), this protein is DNA mismatch repair protein MutL.